Here is a 61-residue protein sequence, read N- to C-terminus: Keratin-associated protein 8-1 (61 aa).

The segment at 13–49 (GCYWGSYGYPLGYSVGCGYGSTYSPVGYGLGYGYNGC) is 11 X 2 AA repeats of G-[YCGS].

It belongs to the KRTAP type 8 family. Interacts with hair keratins. As to expression, expression restricted exclusively to the cortical cells of hair follicles.

In terms of biological role, in the hair cortex, hair keratin intermediate filaments are embedded in an interfilamentous matrix, consisting of hair keratin-associated proteins (KRTAP), which are essential for the formation of a rigid and resistant hair shaft through their extensive disulfide bond cross-linking with abundant cysteine residues of hair keratins. The matrix proteins include the high-sulfur and high-glycine-tyrosine keratins. The protein is Keratin-associated protein 8-1 (Krtap8-1) of Mus musculus (Mouse).